A 319-amino-acid chain; its full sequence is Beta-ketoacyl-[acyl-carrier-protein] synthase III (319 aa).

Residues Cys113 and His246 contribute to the active site. The segment at 247–251 is ACP-binding; it reads QANIR. Asn276 is a catalytic residue.

This sequence belongs to the thiolase-like superfamily. FabH family. Homodimer.

The protein localises to the cytoplasm. It catalyses the reaction malonyl-[ACP] + acetyl-CoA + H(+) = 3-oxobutanoyl-[ACP] + CO2 + CoA. It functions in the pathway lipid metabolism; fatty acid biosynthesis. Its function is as follows. Catalyzes the condensation reaction of fatty acid synthesis by the addition to an acyl acceptor of two carbons from malonyl-ACP. Catalyzes the first condensation reaction which initiates fatty acid synthesis and may therefore play a role in governing the total rate of fatty acid production. Possesses both acetoacetyl-ACP synthase and acetyl transacylase activities. Its substrate specificity determines the biosynthesis of branched-chain and/or straight-chain of fatty acids. The sequence is that of Beta-ketoacyl-[acyl-carrier-protein] synthase III from Ehrlichia canis (strain Jake).